Reading from the N-terminus, the 482-residue chain is Anaerobic nitric oxide reductase flavorubredoxin (482 aa).

The zinc metallo-hydrolase stretch occupies residues 30 to 210 (LRGSSYNSYL…PFSRLVTPKI (181 aa)). The Fe cation site is built by H79, E81, D83, H147, D166, and H227. Residues 254–393 (ITIFYDTMSN…LCRQHGRDIA (140 aa)) enclose the Flavodoxin-like domain. FMN is bound by residues 260 to 264 (TMSNN) and 342 to 369 (AFGS…EMSL). Positions 426-477 (GPSMQCSVCQWIYDPAKGEPLQDVAPGTPWSDVPDNFLCPECSLGKDVFDVL) constitute a Rubredoxin-like domain. Residues C431, C434, C464, and C467 each coordinate Fe cation.

It in the N-terminal section; belongs to the zinc metallo-hydrolase group 3 family. As to quaternary structure, homotetramer. Fe cation serves as cofactor. It depends on FMN as a cofactor.

The protein resides in the cytoplasm. Its pathway is nitrogen metabolism; nitric oxide reduction. Its function is as follows. Anaerobic nitric oxide reductase; uses NADH to detoxify nitric oxide (NO), protecting several 4Fe-4S NO-sensitive enzymes. Has at least 2 reductase partners, only one of which (NorW, flavorubredoxin reductase) has been identified. NO probably binds to the di-iron center; electrons enter from the NorW at rubredoxin and are transferred sequentially to the FMN center and the di-iron center. Also able to function as an aerobic oxygen reductase. The sequence is that of Anaerobic nitric oxide reductase flavorubredoxin from Citrobacter koseri (strain ATCC BAA-895 / CDC 4225-83 / SGSC4696).